A 501-amino-acid chain; its full sequence is Lysine--tRNA ligase (501 aa).

The Mg(2+) site is built by Glu412 and Glu419.

It belongs to the class-II aminoacyl-tRNA synthetase family. As to quaternary structure, homodimer. It depends on Mg(2+) as a cofactor.

It is found in the cytoplasm. It carries out the reaction tRNA(Lys) + L-lysine + ATP = L-lysyl-tRNA(Lys) + AMP + diphosphate. In Pasteurella multocida (strain Pm70), this protein is Lysine--tRNA ligase (lysS).